We begin with the raw amino-acid sequence, 35 residues long: MRKSYEVGISPKINLCNSVEVLTNSFGTVISGRQV.

The protein is Protein YbgU of Escherichia coli (strain K12).